A 118-amino-acid chain; its full sequence is Large ribosomal subunit protein bL20 (118 aa).

This sequence belongs to the bacterial ribosomal protein bL20 family.

Binds directly to 23S ribosomal RNA and is necessary for the in vitro assembly process of the 50S ribosomal subunit. It is not involved in the protein synthesizing functions of that subunit. The polypeptide is Large ribosomal subunit protein bL20 (Sulfurimonas denitrificans (strain ATCC 33889 / DSM 1251) (Thiomicrospira denitrificans (strain ATCC 33889 / DSM 1251))).